Consider the following 509-residue polypeptide: ATP synthase subunit alpha (509 aa).

169–176 (GDRQTGKT) contributes to the ATP binding site.

The protein belongs to the ATPase alpha/beta chains family. As to quaternary structure, F-type ATPases have 2 components, CF(1) - the catalytic core - and CF(0) - the membrane proton channel. CF(1) has five subunits: alpha(3), beta(3), gamma(1), delta(1), epsilon(1). CF(0) has three main subunits: a(1), b(2) and c(9-12). The alpha and beta chains form an alternating ring which encloses part of the gamma chain. CF(1) is attached to CF(0) by a central stalk formed by the gamma and epsilon chains, while a peripheral stalk is formed by the delta and b chains.

It is found in the cell inner membrane. The catalysed reaction is ATP + H2O + 4 H(+)(in) = ADP + phosphate + 5 H(+)(out). Its function is as follows. Produces ATP from ADP in the presence of a proton gradient across the membrane. The alpha chain is a regulatory subunit. The polypeptide is ATP synthase subunit alpha (Brucella anthropi (strain ATCC 49188 / DSM 6882 / CCUG 24695 / JCM 21032 / LMG 3331 / NBRC 15819 / NCTC 12168 / Alc 37) (Ochrobactrum anthropi)).